We begin with the raw amino-acid sequence, 952 residues long: MSLPSRQMAIVNPPPPEYINAKKTGRLTNQLQFLQRVVLKALWKHSFSWPFQQPVDAAKLKLPDYYTIIETPMDLSTIKKRLENRYYEKASECVGDFNTMFSNCYLYNKPGDDIVVMAQALEKLFMQKLSQMPQEEQIVGGKERMKKDIQQKTAVSSAKEQTPSKSAENVFKRQEIPAGFPDVCLSPLNMAQEAPPTCDSQTVVQITKGVKRRADTTTPTTSSAKASSESPPPLREAKPANAPVKENTVKSVLPDSQQQHRVLKTVKVTEQLKHCSEILKEMLAKKHLPYAWPFYNPVDVDALGLHNYYDIVKNPMDLGTIKGKMDKQEYKDACEFAADVRLMFMNCYKYNPPDHEVVTMARMLQDVFEMHFAKIPDEPVESMRACHLTTNSAKALSRESSSEASSGDCSSEDSEDERVQRLAKLQEQLNAVHQQLQVLSQVPLRKLKKKNEKSKRAPKRKKVNRDENPKKKAKQMKQKEKAKSNQPKKKKPLLKLEEEDNAKPMNYDEKRQLSLDINKLPGDKLGRIVHIIQSREPSLRNSNPDEIEIDFETLKASTLRELEKYVLACLRKRSLKPHAKKVVRSKEELHSEKKLELERRLLDVNNQLNCRKRQTKRPAKVAVSPRPPLPPPPPPPPELASGSRLSDSSSSSSSSGSGSSSSSSSSSGSGSSSSDSSSSDSSDSEPEISPKFTGVKQNDLPSKENTKQIQCSVPDITSAETALVQQSTGPCGAPGKPPQQMPGCQVPHHLQATESTASVQTQPLAGDCKRVLHGPPVVHASAESHTVLELQCHAPVQKDIKIKNADSWKSLGKPVKASSVLKSSDELFNQFRKAAIEKEVKARTQEQIRKHLEHSAKDPKVSQESQREFGSGFTPESSSNKVQGRSHGEEQSEQQQLPSPSETQDISKLWLLKDRNLAREKEQERRRREAMAGTIDMTLQSDIMTMFENNFD.

A Bromo 1 domain is found at 26–132 (RLTNQLQFLQ…KLFMQKLSQM (107 aa)). Over residues 141 to 150 (GKERMKKDIQ) the composition is skewed to basic and acidic residues. The interval 141 to 168 (GKERMKKDIQQKTAVSSAKEQTPSKSAE) is disordered. The span at 151 to 167 (QKTAVSSAKEQTPSKSA) shows a compositional bias: polar residues. Position 186 is a phosphoserine (serine 186). Residues 208 to 219 (KGVKRRADTTTP) carry the Nuclear localization signal motif. The interval 209–257 (GVKRRADTTTPTTSSAKASSESPPPLREAKPANAPVKENTVKSVLPDSQ) is disordered. Positions 216–229 (TTTPTTSSAKASSE) are enriched in low complexity. The 110-residue stretch at 266–375 (VKVTEQLKHC…DVFEMHFAKI (110 aa)) folds into the Bromo 2 domain. Disordered regions lie at residues 392-420 (SAKA…ERVQ), 442-504 (VPLR…NAKP), 607-746 (QLNC…GCQV), and 850-930 (KHLE…RREA). Positions 417–442 (ERVQRLAKLQEQLNAVHQQLQVLSQV) form a coiled coil. Positions 445–463 (RKLKKKNEKSKRAPKRKKV) are enriched in basic residues. The 83-residue stretch at 495–577 (KLEEEDNAKP…ACLRKRSLKP (83 aa)) folds into the NET domain. Basic residues predominate over residues 610 to 619 (CRKRQTKRPA). The span at 625-638 (PRPPLPPPPPPPPE) shows a compositional bias: pro residues. Residues 646–681 (SDSSSSSSSSGSGSSSSSSSSSGSGSSSSDSSSSDS) show a composition bias toward low complexity. The span at 718-729 (SAETALVQQSTG) shows a compositional bias: polar residues. Residues 837–936 (EKEVKARTQE…RREAMAGTID (100 aa)) are a coiled coil. Basic and acidic residues predominate over residues 850–867 (KHLEHSAKDPKVSQESQR). Residues 874-883 (TPESSSNKVQ) show a composition bias toward polar residues. The span at 893–902 (EQQQLPSPSE) shows a compositional bias: low complexity. Over residues 911 to 930 (LLKDRNLAREKEQERRRREA) the composition is skewed to basic and acidic residues.

Belongs to the BET family. As to quaternary structure, interacts with the acetylated N-terminus of histone H1, H2, H3 and H4. Interacts with P-TEFb components CDK9 and CCNT1/cyclin-T1. Interacts with mRNA splicing machinery proteins SRSF2, DDX5, HNRNPK and TARDBP. Interacts with SMARCE1. Post-translationally, ubiquitinated in a SPOP-dependent manner, leading to proteasomal degradation.

It localises to the nucleus. In terms of biological role, testis-specific chromatin protein that specifically binds histone H4 acetylated at 'Lys-5' and 'Lys-8' (H4K5ac and H4K8ac, respectively) and plays a key role in spermatogenesis. Required in late pachytene spermatocytes: plays a role in meiotic and post-meiotic cells by binding to acetylated histones at the promoter of specific meiotic and post-meiotic genes, facilitating their activation at the appropriate time. In the post-meiotic phase of spermatogenesis, binds to hyperacetylated histones and participates in their general removal from DNA. Also recognizes and binds a subset of butyrylated histones: able to bind histone H4 butyrylated at 'Lys-8' (H4K8ac), while it is not able to bind H4 butyrylated at 'Lys-5' (H4K5ac). Also acts as a component of the splicing machinery in pachytene spermatocytes and round spermatids and participates in 3'-UTR truncation of specific mRNAs in post-meiotic spermatids. Required for chromocenter organization, a structure comprised of peri-centromeric heterochromatin. The chain is Bromodomain testis-specific protein (Brdt) from Rattus norvegicus (Rat).